The primary structure comprises 67 residues: DNA-directed RNA polymerase subunit omega (67 aa).

The protein belongs to the RNA polymerase subunit omega family. As to quaternary structure, the RNAP catalytic core consists of 2 alpha, 1 beta, 1 beta' and 1 omega subunit. When a sigma factor is associated with the core the holoenzyme is formed, which can initiate transcription.

It catalyses the reaction RNA(n) + a ribonucleoside 5'-triphosphate = RNA(n+1) + diphosphate. Promotes RNA polymerase assembly. Latches the N- and C-terminal regions of the beta' subunit thereby facilitating its interaction with the beta and alpha subunits. In Burkholderia multivorans (strain ATCC 17616 / 249), this protein is DNA-directed RNA polymerase subunit omega.